The chain runs to 419 residues: Enolase (419 aa).

Gln161 lines the (2R)-2-phosphoglycerate pocket. The active-site Proton donor is the Glu205. The Mg(2+) site is built by Asp240, Glu283, and Asp309. Positions 334, 363, 364, and 385 each coordinate (2R)-2-phosphoglycerate. Lys334 acts as the Proton acceptor in catalysis.

The protein belongs to the enolase family. Mg(2+) is required as a cofactor.

The protein localises to the cytoplasm. It localises to the secreted. Its subcellular location is the cell surface. It catalyses the reaction (2R)-2-phosphoglycerate = phosphoenolpyruvate + H2O. It functions in the pathway carbohydrate degradation; glycolysis; pyruvate from D-glyceraldehyde 3-phosphate: step 4/5. In terms of biological role, catalyzes the reversible conversion of 2-phosphoglycerate (2-PG) into phosphoenolpyruvate (PEP). It is essential for the degradation of carbohydrates via glycolysis. The protein is Enolase of Saccharolobus solfataricus (strain ATCC 35092 / DSM 1617 / JCM 11322 / P2) (Sulfolobus solfataricus).